Reading from the N-terminus, the 243-residue chain is CAVP-target protein (243 aa).

Residues 1–22 (PKPPAEAKPAAKPAAPPAAANP) are disordered. The segment covering 7-20 (AKPAAKPAAPPAAA) has biased composition (low complexity). The IQ domain occupies 35-62 (SAATRIQASFRMHKNRMALKEKSIPKFS). 2 consecutive Ig-like C2-type domains span residues 59–150 (PKFS…LALE) and 151–243 (VPAK…VKVN).

Functionally, this protein is the target of CAVP, which binds to it in a calcium-dependent manner. This is CAVP-target protein from Branchiostoma lanceolatum (Common lancelet).